The chain runs to 325 residues: Thioredoxin reductase (325 aa).

FAD-binding positions include 10–13 (SGPS), 39–40 (IA), Gln44, Asn53, Val86, Cys143, Asp286, and 293–295 (RQA). Cys140 and Cys143 are disulfide-bonded.

Belongs to the class-II pyridine nucleotide-disulfide oxidoreductase family. As to quaternary structure, homodimer. The cofactor is FAD.

The protein localises to the cytoplasm. It carries out the reaction [thioredoxin]-dithiol + NADP(+) = [thioredoxin]-disulfide + NADPH + H(+). This chain is Thioredoxin reductase (TRR1), found in Pneumocystis carinii.